A 382-amino-acid polypeptide reads, in one-letter code: E3 ubiquitin-protein ligase RNF133 (382 aa).

One can recognise a PA domain in the interval 65–167 (SSILKRVAGV…IKGMEILHLI (103 aa)). Residues 190–210 (YFVSFMIVTTATLAYFTFYHI) traverse the membrane as a helical segment. The RING-type; atypical zinc-finger motif lies at 256–297 (CVICFEAYKPNEIVRILTCKHFFHKNCIDPWILAHGTCPMCK). Positions 328-382 (TLSPVEEETNYELPPARTSSKVTHVQEHPTSSANAGSQPPEAEETSHPSHGQQVL) are disordered. Over residues 344–364 (RTSSKVTHVQEHPTSSANAGS) the composition is skewed to polar residues.

In terms of assembly, interacts with E3 ligase UBE2J1. In terms of processing, auto-ubiquitinated. As to expression, expression is testis-specific.

The protein resides in the endoplasmic reticulum membrane. The catalysed reaction is S-ubiquitinyl-[E2 ubiquitin-conjugating enzyme]-L-cysteine + [acceptor protein]-L-lysine = [E2 ubiquitin-conjugating enzyme]-L-cysteine + N(6)-ubiquitinyl-[acceptor protein]-L-lysine.. It functions in the pathway protein modification; protein ubiquitination. Functionally, has E3 ubiquitin-protein ligase activity. Plays a role in male fecundity through the interaction with the E2 ubituitin-protein ligase UBE2J1. This is E3 ubiquitin-protein ligase RNF133 (Rnf133) from Mus musculus (Mouse).